A 160-amino-acid polypeptide reads, in one-letter code: Large ribosomal subunit protein uL22c (160 aa).

This sequence belongs to the universal ribosomal protein uL22 family. Part of the 50S ribosomal subunit.

The protein localises to the plastid. It is found in the chloroplast. Its function is as follows. This protein binds specifically to 23S rRNA. Functionally, the globular domain of the protein is located near the polypeptide exit tunnel on the outside of the subunit, while an extended beta-hairpin is found that lines the wall of the exit tunnel in the center of the 70S ribosome. The sequence is that of Large ribosomal subunit protein uL22c (rpl22) from Lepidium virginicum (Virginia pepperweed).